Reading from the N-terminus, the 318-residue chain is Ubiquitin-like domain-containing CTD phosphatase 1 (318 aa).

One can recognise a Ubiquitin-like domain in the interval 3–81 (LPIIVKWGGQ…IMMMGTREES (79 aa)). The residue at position 117 (Lys-117) is an N6-acetyllysine. The FCP1 homology domain occupies 133–294 (PREGKKLLVL…VKLTQYLKEI (162 aa)). 3 residues coordinate Mg(2+): Asp-143, Asp-145, and Asp-253.

It depends on Mg(2+) as a cofactor.

It localises to the nucleus. The catalysed reaction is O-phospho-L-seryl-[protein] + H2O = L-seryl-[protein] + phosphate. It catalyses the reaction O-phospho-L-threonyl-[protein] + H2O = L-threonyl-[protein] + phosphate. Dephosphorylates 26S nuclear proteasomes, thereby decreasing their proteolytic activity. Recruited to the 19S regulatory particle of the 26S proteasome through its interaction with 19S component PSMD2/RPN1. Once recruited, dephosphorylates 19S component PSMC2/RPT1 which impairs PSMC2 ATPase activity and disrupts 26S proteasome assembly. Has also been reported to stimulate the proteolytic activity of the 26S proteasome. The polypeptide is Ubiquitin-like domain-containing CTD phosphatase 1 (Ublcp1) (Rattus norvegicus (Rat)).